We begin with the raw amino-acid sequence, 95 residues long: Aspartyl/glutamyl-tRNA(Asn/Gln) amidotransferase subunit C (95 aa).

Belongs to the GatC family. As to quaternary structure, heterotrimer of A, B and C subunits.

The catalysed reaction is L-glutamyl-tRNA(Gln) + L-glutamine + ATP + H2O = L-glutaminyl-tRNA(Gln) + L-glutamate + ADP + phosphate + H(+). The enzyme catalyses L-aspartyl-tRNA(Asn) + L-glutamine + ATP + H2O = L-asparaginyl-tRNA(Asn) + L-glutamate + ADP + phosphate + 2 H(+). Its function is as follows. Allows the formation of correctly charged Asn-tRNA(Asn) or Gln-tRNA(Gln) through the transamidation of misacylated Asp-tRNA(Asn) or Glu-tRNA(Gln) in organisms which lack either or both of asparaginyl-tRNA or glutaminyl-tRNA synthetases. The reaction takes place in the presence of glutamine and ATP through an activated phospho-Asp-tRNA(Asn) or phospho-Glu-tRNA(Gln). The polypeptide is Aspartyl/glutamyl-tRNA(Asn/Gln) amidotransferase subunit C (Dehalococcoides mccartyi (strain ATCC BAA-2100 / JCM 16839 / KCTC 5957 / BAV1)).